Reading from the N-terminus, the 339-residue chain is MKPDLPPRIAVLLVNLGTPDEPTAPAVRRYLKQFLSDPRVIEIPKFLWAIILNLFVLPSRPKRVAEAYASIWDGDSPMRNILNTQVEMLDKRLAERAAPFRVSVHAAMSYGNPGLPDVMDKLRSEGVDHFVMLPVFPQYSATSTGAVYDAMTKWSLKQRNLPNMTIVKDYFAHPLYIKALADSIRRFQAIHGKPEKLMFSFHGIPQPYADKGDPYPKRCKCTAAQVAHELGLKPDEWIISFQSRFGKQEWIKPYTDVVLEDWGKSGIRSVQILSPAFSADCLETLEELAIENRETFLKAGGEEYHYIPALNADEAHIDLLEAMSAPLVKGWAGTLDGWA.

Residues His202 and Glu283 each contribute to the Fe cation site.

The protein belongs to the ferrochelatase family.

The protein resides in the cytoplasm. The catalysed reaction is heme b + 2 H(+) = protoporphyrin IX + Fe(2+). It participates in porphyrin-containing compound metabolism; protoheme biosynthesis; protoheme from protoporphyrin-IX: step 1/1. Its function is as follows. Catalyzes the ferrous insertion into protoporphyrin IX. The chain is Ferrochelatase from Psychrobacter arcticus (strain DSM 17307 / VKM B-2377 / 273-4).